The following is a 506-amino-acid chain: Dolichyl pyrophosphate Glc1Man9GlcNAc2 alpha-1,3-glucosyltransferase (506 aa).

The next 12 helical transmembrane spans lie at 10–30 (RLLLWFFAVATAVKLLLIPSS), 101–121 (VIYFQRISVIVSDLCLLYGVY), 133–153 (NLICALVIWSPGLLIVDHIHF), 176–196 (LLGGFLFAVLLCFKHLFAVTA), 219–239 (LVTIGAVVVAVFAAAYGPFIY), 261–281 (YWAPNFWVFYIILDKGLAVLL), 305–325 (PFAVLPQITPLTTFAMVLLAI), 339–359 (GLVARWVAYAYTCGFLFGWHV), 384–401 (HYFLVSIVSCYSLYPLLY), 406–426 (YPIKVLLLLLHSVVMWLGFAA), 454–474 (YLMGLIIVEIVSQFLHPYFLG), and 479–499 (FLPLMLISTYCTVGIMYSWIW).

It belongs to the ALG6/ALG8 glucosyltransferase family.

The protein resides in the endoplasmic reticulum membrane. The enzyme catalyses an alpha-D-Glc-(1-&gt;3)-alpha-D-Man-(1-&gt;2)-alpha-D-Man-(1-&gt;2)-alpha-D-Man-(1-&gt;3)-[alpha-D-Man-(1-&gt;2)-alpha-D-Man-(1-&gt;3)-[alpha-D-Man-(1-&gt;2)-alpha-D-Man-(1-&gt;6)]-alpha-D-Man-(1-&gt;6)]-beta-D-Man-(1-&gt;4)-beta-D-GlcNAc-(1-&gt;4)-alpha-D-GlcNAc-diphospho-di-trans,poly-cis-dolichol + a di-trans,poly-cis-dolichyl beta-D-glucosyl phosphate = an alpha-D-Glc-(1-&gt;3)-alpha-D-Glc-(1-&gt;3)-alpha-D-Man-(1-&gt;2)-alpha-D-Man-(1-&gt;2)-alpha-D-Man-(1-&gt;3)-[alpha-D-Man-(1-&gt;2)-alpha-D-Man-(1-&gt;3)-[alpha-D-Man-(1-&gt;2)-alpha-D-Man-(1-&gt;6)]-alpha-D-Man-(1-&gt;6)]-beta-D-Man-(1-&gt;4)-beta-D-GlcNAc-(1-&gt;4)-alpha-D-GlcNAc-diphospho-di-trans,poly-cis-dolichol + a di-trans,poly-cis-dolichyl phosphate + H(+). Its pathway is protein modification; protein glycosylation. Its function is as follows. Dolichyl pyrophosphate Glc1Man9GlcNAc2 alpha-1,3-glucosyltransferase that operates in the biosynthetic pathway of dolichol-linked oligosaccharides, the glycan precursors employed in protein asparagine (N)-glycosylation. The assembly of dolichol-linked oligosaccharides begins on the cytosolic side of the endoplasmic reticulum membrane and finishes in its lumen. The sequential addition of sugars to dolichol pyrophosphate produces dolichol-linked oligosaccharides containing fourteen sugars, including two GlcNAcs, nine mannoses and three glucoses. Once assembled, the oligosaccharide is transferred from the lipid to nascent proteins by oligosaccharyltransferases. In the lumen of the endoplasmic reticulum, adds the second glucose residue from dolichyl phosphate glucose (Dol-P-Glc) onto the lipid-linked oligosaccharide intermediate Glc(1)Man(9)GlcNAc(2)-PP-Dol to produce Glc(2)Man(9)GlcNAc(2)-PP-Dol. The polypeptide is Dolichyl pyrophosphate Glc1Man9GlcNAc2 alpha-1,3-glucosyltransferase (Arabidopsis thaliana (Mouse-ear cress)).